The following is a 559-amino-acid chain: 2,3-bisphosphoglycerate-independent phosphoglycerate mutase (559 aa).

Mn(2+) is bound by residues D28 and S81. S81 acts as the Phosphoserine intermediate in catalysis. Substrate contacts are provided by residues H140, 170–171, R206, R213, 286–289, and K361; these read RD and RADR. Mn(2+) contacts are provided by D430, H434, D471, H472, and H501.

Belongs to the BPG-independent phosphoglycerate mutase family. In terms of assembly, monomer. Requires Mn(2+) as cofactor. In terms of tissue distribution, found ubiquitously in germinating seed.

It is found in the cytoplasm. The enzyme catalyses (2R)-2-phosphoglycerate = (2R)-3-phosphoglycerate. It functions in the pathway carbohydrate degradation; glycolysis; pyruvate from D-glyceraldehyde 3-phosphate: step 3/5. Functionally, catalyzes the interconversion of 2-phosphoglycerate and 3-phosphoglycerate. This Nicotiana tabacum (Common tobacco) protein is 2,3-bisphosphoglycerate-independent phosphoglycerate mutase.